We begin with the raw amino-acid sequence, 151 residues long: MKLVIQRVSQAHVNVEGTTVGAIRTGLVVLVGISKSDTIKDADYLADKVLGLRIFPDNEGKMNRNVAEAHGAILIISQFTLYGDCRRGRRPSFDAAAAPGEALTLYNYFVDTVRKSPVPVETGTFQATMEVSLVNQGPVTIVIESEERNRK.

Residues 137 to 138 (GP) carry the Gly-cisPro motif, important for rejection of L-amino acids motif.

Belongs to the DTD family. As to quaternary structure, homodimer.

The protein localises to the cytoplasm. The catalysed reaction is glycyl-tRNA(Ala) + H2O = tRNA(Ala) + glycine + H(+). The enzyme catalyses a D-aminoacyl-tRNA + H2O = a tRNA + a D-alpha-amino acid + H(+). Its function is as follows. An aminoacyl-tRNA editing enzyme that deacylates mischarged D-aminoacyl-tRNAs. Also deacylates mischarged glycyl-tRNA(Ala), protecting cells against glycine mischarging by AlaRS. Acts via tRNA-based rather than protein-based catalysis; rejects L-amino acids rather than detecting D-amino acids in the active site. By recycling D-aminoacyl-tRNA to D-amino acids and free tRNA molecules, this enzyme counteracts the toxicity associated with the formation of D-aminoacyl-tRNA entities in vivo and helps enforce protein L-homochirality. This Solibacter usitatus (strain Ellin6076) protein is D-aminoacyl-tRNA deacylase.